We begin with the raw amino-acid sequence, 440 residues long: KH domain-containing protein 3 (440 aa).

An involved in RNA binding region spans residues 1–39; sequence MASLKRFQTLVPLDHKQGTLFEIIGEPKLPKWFHVECLE. One can recognise a KH; atypical domain in the interval 40–118; sequence DPKRLYVEPR…CRMKLMEIEA (79 aa). A disordered region spans residues 132 to 201; it reads KAATQPAPVK…EVREAATEQA (70 aa). A Phosphoserine; by ATR modification is found at S151. 2 positions are modified to phosphothreonine: T274 and T286. The required for interaction with NUMA1 and regulation of apoptosis in response to DNA damage stretch occupies residues 341-440; the sequence is VREAATQLSP…RDAWESFIIL (100 aa). S349 carries the phosphoserine modification.

It belongs to the KHDC1 family. Component of the subcortical maternal complex (SCMC), at least composed of NLRP5, KHDC3, OOEP, and TLE6. Within the complex, interacts with NLRP5, OOEP and TLE6. The SCMC may facilitate translocation of its components between the nuclear and cytoplasmic compartments. Forms a scaffold complex with OOEP/FLOPED, and interacts with BLM and TRIM25 at DNA replication forks. Interacts with PARP1; the interaction is increased following the formation of DNA double-strand breaks. Interacts (via C-terminus) with NUMA1. Phosphorylation at Ser-151 is required to promote stalled fork restart. In terms of tissue distribution, detected in ovary, but not in testis or somatic tissues. In the ovary, expressed in growing oocytes.

Its subcellular location is the cytoplasm. It is found in the cell cortex. The protein resides in the nucleus. It localises to the mitochondrion. The protein localises to the cytoskeleton. Its subcellular location is the microtubule organizing center. It is found in the centrosome. The protein resides in the chromosome. Its function is as follows. Component of the subcortical maternal complex (SCMC), a multiprotein complex that plays a key role in early embryonic development. The SCMC complex is a structural constituent of cytoplasmic lattices, which consist in fibrous structures found in the cytoplasm of oocytes and preimplantation embryos. They are required to store maternal proteins critical for embryonic development, such as proteins that control epigenetic reprogramming of the preimplantation embryo, and prevent their degradation or activation. KHDC3 ensures proper spindle assembly by regulating the localization of AURKA via RHOA signaling and of PLK1 via a RHOA-independent process. Required for the localization of MAD2L1 to kinetochores to enable spindle assembly checkpoint function. As part of the OOEP-KHDC3 scaffold, recruits BLM and TRIM25 to DNA replication forks, thereby promoting the ubiquitination of BLM by TRIM25, enhancing BLM retainment at replication forks and therefore promoting stalled replication fork restart. Regulates homologous recombination-mediated DNA repair via recruitment of RAD51 to sites of DNA double-strand breaks, and sustainment of PARP1 activity, which in turn modulates downstream ATM or ATR activation. Activation of ATM or ATR in response to DNA double-strand breaks may be cell-type specific. Its role in DNA double-strand break repair is independent of its role in restarting stalled replication forks. Promotes neural stem cell neurogenesis and neuronal differentiation in the hippocampus. May regulate normal development of learning, memory and anxiety. Capable of binding RNA. The protein is KH domain-containing protein 3 of Mus musculus (Mouse).